Here is a 180-residue protein sequence, read N- to C-terminus: Adenine phosphoribosyltransferase (180 aa).

S2 is modified (N-acetylserine). Phosphoserine is present on residues S4, S15, and S30. Position 60 is a phosphotyrosine (Y60). Residue S66 is modified to Phosphoserine. At K114 the chain carries N6-acetyllysine. T135 carries the post-translational modification Phosphothreonine.

Belongs to the purine/pyrimidine phosphoribosyltransferase family. Homodimer.

The protein resides in the cytoplasm. It catalyses the reaction AMP + diphosphate = 5-phospho-alpha-D-ribose 1-diphosphate + adenine. It participates in purine metabolism; AMP biosynthesis via salvage pathway; AMP from adenine: step 1/1. In terms of biological role, catalyzes a salvage reaction resulting in the formation of AMP, that is energically less costly than de novo synthesis. In Mus pahari (Gairdner's shrew-mouse), this protein is Adenine phosphoribosyltransferase.